The primary structure comprises 337 residues: Ketol-acid reductoisomerase (NADP(+)) (337 aa).

The 181-residue stretch at 3-183 (IDVFYDDDAD…GGGRAGVIPT (181 aa)) folds into the KARI N-terminal Rossmann domain. Residues 26-29 (YGSQ), Arg49, Ser52, Ser54, and 84-87 (DTSQ) contribute to the NADP(+) site. The active site involves His109. Gly135 contacts NADP(+). One can recognise a KARI C-terminal knotted domain in the interval 184-329 (TFEAETVTDL…EKLRDLMSWV (146 aa)). The Mg(2+) site is built by Asp192, Glu196, Glu228, and Glu232. Residue Ser253 coordinates substrate.

It belongs to the ketol-acid reductoisomerase family. It depends on Mg(2+) as a cofactor.

It carries out the reaction (2R)-2,3-dihydroxy-3-methylbutanoate + NADP(+) = (2S)-2-acetolactate + NADPH + H(+). The catalysed reaction is (2R,3R)-2,3-dihydroxy-3-methylpentanoate + NADP(+) = (S)-2-ethyl-2-hydroxy-3-oxobutanoate + NADPH + H(+). The protein operates within amino-acid biosynthesis; L-isoleucine biosynthesis; L-isoleucine from 2-oxobutanoate: step 2/4. It functions in the pathway amino-acid biosynthesis; L-valine biosynthesis; L-valine from pyruvate: step 2/4. Involved in the biosynthesis of branched-chain amino acids (BCAA). Catalyzes an alkyl-migration followed by a ketol-acid reduction of (S)-2-acetolactate (S2AL) to yield (R)-2,3-dihydroxy-isovalerate. In the isomerase reaction, S2AL is rearranged via a Mg-dependent methyl migration to produce 3-hydroxy-3-methyl-2-ketobutyrate (HMKB). In the reductase reaction, this 2-ketoacid undergoes a metal-dependent reduction by NADPH to yield (R)-2,3-dihydroxy-isovalerate. This Corynebacterium urealyticum (strain ATCC 43042 / DSM 7109) protein is Ketol-acid reductoisomerase (NADP(+)).